The chain runs to 431 residues: Phosphomethylpyrimidine synthase (431 aa).

Substrate-binding positions include Asn66, Met95, Tyr124, His163, 185–187 (SRG), 226–229 (DGLR), and Glu265. Position 269 (His269) interacts with Zn(2+). Tyr292 contributes to the substrate binding site. His333 provides a ligand contact to Zn(2+). The [4Fe-4S] cluster site is built by Cys408, Cys411, and Cys415.

Belongs to the ThiC family. [4Fe-4S] cluster serves as cofactor.

The enzyme catalyses 5-amino-1-(5-phospho-beta-D-ribosyl)imidazole + S-adenosyl-L-methionine = 4-amino-2-methyl-5-(phosphooxymethyl)pyrimidine + CO + 5'-deoxyadenosine + formate + L-methionine + 3 H(+). The protein operates within cofactor biosynthesis; thiamine diphosphate biosynthesis. In terms of biological role, catalyzes the synthesis of the hydroxymethylpyrimidine phosphate (HMP-P) moiety of thiamine from aminoimidazole ribotide (AIR) in a radical S-adenosyl-L-methionine (SAM)-dependent reaction. The polypeptide is Phosphomethylpyrimidine synthase (Dehalococcoides mccartyi (strain CBDB1)).